Reading from the N-terminus, the 325-residue chain is RNA ligase 1 (325 aa).

It depends on Mg(2+) as a cofactor. Mn(2+) serves as cofactor. Post-translationally, AMPylates itself (auto-AMPylation).

The enzyme catalyses ATP + (ribonucleotide)n-3'-hydroxyl + 5'-phospho-(ribonucleotide)m = (ribonucleotide)n+m + AMP + diphosphate.. In terms of biological role, functions as an RNA ligase, in vitro. The ligation reaction entails three nucleotidyl transfer steps. In the first step, the RNA ligase reacts with ATP in the absence of nucleic acid to form a covalent ligase-AMP intermediate and release pyrophosphate. In step 2, the ligase-AMP binds to the nucleic acid and transfers the adenylate to the 5'-PO4 terminus to form an adenylylated intermediate. In step 3, the RNA ligase directs the attack of the 3'-OH on the 5'-phosphoanhydride linkage, resulting in a repaired 3'-5' phosphodiester and release of AMP. Exhibits selectivity for single-stranded RNA substrates and may not have nick-sealing activity on double-stranded DNA-RNA hybrids. May play a role in maintaining RNA integrity under stress conditions, for example in response to reactive oxygen species (ROS). The polypeptide is RNA ligase 1 (Rattus norvegicus (Rat)).